Here is a 347-residue protein sequence, read N- to C-terminus: Probable E3 ubiquitin-protein ligase DTX3 (347 aa).

The interval 113–157 (EHPEMHRAGPPPLRAAPLLPPGARGLPPPPPPLPPPLPPRLREEA) is disordered. The segment covering 121–151 (GPPPLRAAPLLPPGARGLPPPPPPLPPPLPP) has biased composition (pro residues). The segment at 164–205 (CPICLGEIQNAKTLEKCRHSFCEGCITRALQVKKACPMCGRF) adopts an RING-type zinc-finger fold.

The protein belongs to the Deltex family. Homodimer. May form a heterodimers with other members of the Deltex family. Interacts with NOTCH1.

The protein resides in the cytoplasm. The catalysed reaction is S-ubiquitinyl-[E2 ubiquitin-conjugating enzyme]-L-cysteine + [acceptor protein]-L-lysine = [E2 ubiquitin-conjugating enzyme]-L-cysteine + N(6)-ubiquitinyl-[acceptor protein]-L-lysine.. It functions in the pathway protein modification; protein ubiquitination. In terms of biological role, regulator of Notch signaling, a signaling pathway involved in cell-cell communications that regulates a broad spectrum of cell-fate determinations. Probably acts both as a positive and negative regulator of Notch, depending on the developmental and cell context. Functions as an ubiquitin ligase protein in vitro, suggesting that it may regulate the Notch pathway via some ubiquitin ligase activity. The chain is Probable E3 ubiquitin-protein ligase DTX3 (DTX3) from Homo sapiens (Human).